The following is a 211-amino-acid chain: Redox-sensing transcriptional repressor Rex (211 aa).

Residues 17-56 constitute a DNA-binding region (H-T-H motif); that stretch reads KYHRYLEELLRNEVDRISSKELSKKIGFTASQIRQDFNCF. 91–96 serves as a coordination point for NAD(+); that stretch reads GGGNIG.

The protein belongs to the transcriptional regulatory Rex family. In terms of assembly, homodimer.

The protein resides in the cytoplasm. In terms of biological role, modulates transcription in response to changes in cellular NADH/NAD(+) redox state. This Clostridium tetani (strain Massachusetts / E88) protein is Redox-sensing transcriptional repressor Rex.